Consider the following 382-residue polypeptide: Elloramycin glycosyltransferase ElmGT (382 aa).

The protein belongs to the glycosyltransferase 28 family.

It catalyses the reaction 8-demethyltetracenomycin C + dTDP-beta-L-rhamnose = 8-demethyl-8-alpha-L-rhamnosyl-tetracenomycin C + dTDP + H(+). Its pathway is antibiotic biosynthesis. In terms of biological role, glycosyltransferase that transfers an L-rhamnose moiety from dTDP-L-rhamnose to the elloramycin aglycone 8-demethyl-tetracenomycin C (8DMTC) in elloramycin biosynthesis, an antitumor polyketide. Possesses donor substrate flexibility: able to transfer at least 11 different sugars to 8DMTC, such as NDP-D-glucose, as well as NDP-L-digitoxose, including both L- and D-isomeric forms of some sugars. The protein is Elloramycin glycosyltransferase ElmGT of Streptomyces olivaceus.